Reading from the N-terminus, the 221-residue chain is Ribosome maturation factor RimM (221 aa).

A disordered region spans residues 1–23; that stretch reads MTERKQGAAAPRPLNRPQGESPK. The PRC barrel domain occupies 144 to 221; sequence ENEFYWVDLI…RIVVDWGLDY (78 aa).

Belongs to the RimM family. In terms of assembly, binds ribosomal protein uS19.

The protein localises to the cytoplasm. An accessory protein needed during the final step in the assembly of 30S ribosomal subunit, possibly for assembly of the head region. Essential for efficient processing of 16S rRNA. May be needed both before and after RbfA during the maturation of 16S rRNA. It has affinity for free ribosomal 30S subunits but not for 70S ribosomes. The polypeptide is Ribosome maturation factor RimM (Cupriavidus pinatubonensis (strain JMP 134 / LMG 1197) (Cupriavidus necator (strain JMP 134))).